A 64-amino-acid polypeptide reads, in one-letter code: Alpha-conotoxin-like Lt1.3 (64 aa).

A signal peptide spans 1–21; that stretch reads MGMRMMFTMFLLVVLTTTVVS. The propeptide occupies 22–45; that stretch reads FNLDRESNHENRRTSNQITRGMWD. 2 disulfides stabilise this stretch: Cys-47-Cys-53 and Cys-48-Cys-61. A lacks the Ser-Xaa-Pro motif that is crucial for potent interaction with nAChR region spans residues 49-51; sequence DDP.

This sequence belongs to the conotoxin A superfamily. In terms of tissue distribution, expressed by the venom duct.

The protein localises to the secreted. Its function is as follows. Alpha-conotoxins act on postsynaptic membranes, they bind to the nicotinic acetylcholine receptors (nAChR) and thus inhibit them. Has possibly a distinct nAChR binding mode from other alpha-conotoxins, due to a different three residue motif (lacks the Ser-Xaa-Pro motif). This Conus litteratus (Lettered cone) protein is Alpha-conotoxin-like Lt1.3.